We begin with the raw amino-acid sequence, 583 residues long: uncharacterized protein (583 aa).

Residues 162-424 form the FAD-binding FR-type domain; it reads YGIFAAPILD…RGVQQNPFAK (263 aa).

Belongs to the flavoprotein pyridine nucleotide cytochrome reductase family. FAD serves as cofactor.

The protein resides in the mitochondrion. This is an uncharacterized protein from Schizosaccharomyces pombe (strain 972 / ATCC 24843) (Fission yeast).